The chain runs to 1111 residues: MSKKVQAKQGTDDLVMLPKVSEDEICENLKKRYMNDFIYTNIGPVLISVNPFRNLNNSGPDFIEAYRGKHAQEVPPHVYQLAESAYRAMKNDQENQCVIISGESGAGKTEAAKLIMGYVSAISGSTEKVEYVKHVILESNPLLEAFGNAKTLRNNNSSRFGKYFEIQFDKAGDPVGGKIYNYLLEKSRVVYQNPGERNFHIFYQLLAGASAQEKRDYVLSSPESYYYLNQSQCYTVDGINDVSDYAEVRQAMDTIGLTAQEQSDIIRIVACVLHIGNIYFIEDDKGNAAIYDPNALELAASMLCIDSATLQNAILFRVINTGGAGGAGNRRSTYNVPQNVEQANGTRDALARTIYDRMFSWLVERVNQSLSYYKSPYQNVIGILDIFGFEIFEKNGFEQFCINFVNEKLQQFFIELTLKAEQEEYVREGIKWEPIKYFNNQIVCDLIEGKSPPGIFSLLDDICSTLHAQSTGTDQKFLEKMAGIYDGHLHWRGMTGAFAIKHYAGEVTYEAEGFSDKNKDTLFFDLIEAIQCSKMPFLASLFNEDTGSLQKKRPTTAGFKIKTSAGELMKALSQCTPHYIRCIKPNETKKAKDWENSRVKHQVQYLGLLENVRVRRAGFAYRNTFDKVLKRYKKLSSKTWGIWGEWKGDAIEGCKTIFQDMNLEAGQWQLGKTKVFIRHPETVFLLEEALDKKDFDCTAKIQKAFRNWKAKKHSLEQRAQIAHMFKDKKERQRNSIDRKFTSDYIDFENQFGLQEAMQNAHKKERVVFADTVIKIDRRAKQKNYEMVLTDQALYFVEKSIKKKVLVHTLIRRVGLREIKGVSISTLSDNVIVFHLPEHDQVIENDKKTEIIIVLVEYFKAIGGGSLNVQFSDRINYTLKKGEQKEISFQKSEQCPTLVVKKGGKGLIGTIASGLPSSTDSTPKNYNPNSMSQASSRPAPQQSAGRGRGMPQGAGQPQPQQPQQQQRPMPQPQQGGGARPMPQPQQGGGARPMGAPQQGGAPQQGAGRQLPQPTQQGGAPGGRGAPMGRGAPGGGPAGAGGRPLPTVAKPAPQPSRPTAKALYDYDASSTDELSFKEGDIIFIVQKDNGGWTQGELKSGQKGWAPTNYLQYN.

The 683-residue stretch at 9–691 folds into the Myosin motor domain; sequence QGTDDLVMLP…TVFLLEEALD (683 aa). 102–109 provides a ligand contact to ATP; sequence GESGAGKT. S332 carries the post-translational modification Phosphoserine. Residues 547-627 form an actin-binding region; it reads GSLQKKRPTT…GFAYRNTFDK (81 aa). The region spanning 729 to 913 is the TH1 domain; it reads KERQRNSIDR…KGLIGTIASG (185 aa). The tract at residues 910 to 1058 is disordered; the sequence is IASGLPSSTD…PAPQPSRPTA (149 aa). Residues 914–928 show a composition bias toward polar residues; that stretch reads LPSSTDSTPKNYNPN. Composition is skewed to low complexity over residues 929–944, 952–967, and 991–1012; these read SMSQASSRPAPQQSAG, GAGQPQPQQPQQQQRP, and PMGAPQQGGAPQQGAGRQLPQP. Residues 1017–1040 are compositionally biased toward gly residues; the sequence is GAPGGRGAPMGRGAPGGGPAGAGG. The SH3 domain occupies 1053-1111; the sequence is PSRPTAKALYDYDASSTDELSFKEGDIIFIVQKDNGGWTQGELKSGQKGWAPTNYLQYN.

It belongs to the TRAFAC class myosin-kinesin ATPase superfamily. Myosin family. Myosin I heavy chain is single-headed. Dimer of a heavy and a light chain. Inability to self-assemble into filaments.

Its subcellular location is the cell projection. It localises to the pseudopodium. It is found in the cytoplasm. The protein localises to the cell cortex. Myosin is a protein that binds to actin and has ATPase activity that is activated by actin. Myosin IB may have a role in chemotaxis and aggregation; it could serve to stabilize and even retract cortical structures, such as pseudopods and lamellopods. Involved in the whole cell motility of aggregation-stages cells. Overexpression results in significant decrease in the rate of cellular translocation and fluid-phase pinocytosis and abnormalities in the normal rearrangement of the actin cytoskeleton. The polypeptide is Myosin IB heavy chain (myoB) (Dictyostelium discoideum (Social amoeba)).